We begin with the raw amino-acid sequence, 334 residues long: Anthranilate phosphoribosyltransferase (334 aa).

Residues glycine 79, 82-83 (GD), serine 87, 89-92 (NIST), 107-115 (KHGNRSISS), and serine 119 each bind 5-phospho-alpha-D-ribose 1-diphosphate. Glycine 79 contributes to the anthranilate binding site. Serine 91 contacts Mg(2+). Residue asparagine 110 participates in anthranilate binding. Arginine 165 serves as a coordination point for anthranilate. Mg(2+) contacts are provided by aspartate 224 and glutamate 225.

The protein belongs to the anthranilate phosphoribosyltransferase family. As to quaternary structure, homodimer. The cofactor is Mg(2+).

It carries out the reaction N-(5-phospho-beta-D-ribosyl)anthranilate + diphosphate = 5-phospho-alpha-D-ribose 1-diphosphate + anthranilate. The protein operates within amino-acid biosynthesis; L-tryptophan biosynthesis; L-tryptophan from chorismate: step 2/5. In terms of biological role, catalyzes the transfer of the phosphoribosyl group of 5-phosphorylribose-1-pyrophosphate (PRPP) to anthranilate to yield N-(5'-phosphoribosyl)-anthranilate (PRA). This is Anthranilate phosphoribosyltransferase from Streptococcus sanguinis (strain SK36).